The chain runs to 192 residues: Ciliary microtubule-associated protein 3 (192 aa).

Interacts with proteins involved in ciliary transport, including ARL13B, CETN1, KIF3A, RAB6A, RAB8A, TUBB1 and TUBG1. Interacts with AURKA.

The protein localises to the cytoplasmic vesicle. It is found in the golgi apparatus. It localises to the trans-Golgi network. The protein resides in the cytoplasm. During primary cilia disassembly, involved in cilia disassembly. Required specifically to control cilia retraction as well as the liberation and duplication of the basal body/centrosome. May act by stimulating AURKA activity at the basal body in a cell cycle-dependent manner. The chain is Ciliary microtubule-associated protein 3 (CIMAP3) from Bos taurus (Bovine).